We begin with the raw amino-acid sequence, 364 residues long: Appendage-associated protein (364 aa).

Coiled coils occupy residues 142–196 and 288–313; these read IIHE…AECR and RIAQAELAAAADALKRAADKLQALGK.

It is found in the secreted. Associates with actin filament appendages that are formed in the inclusion appendages of the parasitophorous vacuole during infection of the host erythrocyte. This is Appendage-associated protein from Anaplasma marginale (strain Illinois).